A 415-amino-acid polypeptide reads, in one-letter code: Probable G-protein coupled receptor 19 (415 aa).

Residues 1 to 69 (MVFAHRMDND…LNPGEVATAS (69 aa)) are Extracellular-facing. Asparagine 25 and asparagine 52 each carry an N-linked (GlcNAc...) asparagine glycan. Residues 70–90 (IFFGALWLFSIFGNSLVCLVI) form a helical membrane-spanning segment. Over 91-102 (HRSRRTQSTTNY) the chain is Cytoplasmic. Residues 103–123 (FVVSMACADLLISVASTPFVV) traverse the membrane as a helical segment. Residues 124 to 152 (LQFTTGRWTLGSAMCKVVRYFQYLTPGVQ) lie on the Extracellular side of the membrane. Residues cysteine 138 and cysteine 210 are joined by a disulfide bond. Residues 153 to 173 (IYVLLSICIDRFYTIVYPLSF) form a helical membrane-spanning segment. Over 174–182 (KVSREKAKK) the chain is Cytoplasmic. A helical transmembrane segment spans residues 183 to 203 (MIAASWILDAAFVTPVFFFYG). Topologically, residues 204–221 (SNWDSHCNYFLPPSWEGT) are extracellular. Residues 222–242 (AYTVIHFLVGFVIPSILIILF) form a helical membrane-spanning segment. Residues 243 to 277 (YQKVIKYIWRIGTDGRTLRRTMNIVPRTKVKTVKM) lie on the Cytoplasmic side of the membrane. A helical membrane pass occupies residues 278 to 298 (FLLLNLVFLFSWLPFHVAQLW). The Extracellular portion of the chain corresponds to 299–309 (HPHEQDYKKSS). Residues 310–332 (LVFTAVTWVSFSSSASKPTLYSI) traverse the membrane as a helical segment. Over 333–415 (YNANFRRGMK…INSNPPNTFV (83 aa)) the chain is Cytoplasmic.

The protein belongs to the G-protein coupled receptor 1 family. As to expression, strongly expressed in the brain.

Its subcellular location is the cell membrane. G-protein coupled receptor that plays a role in the regulation of circadian rhythms and energy metabolism. Participates in maintaining proper circadian gene expression in the suprachiasmatic nucleus (SCN), the locus of the master circadian clock in the brain. May function as a coordinator of aging-associated metabolic dysfunction, stress response, DNA integrity management, and eventual senescence. Upon binding to adropin, modulates mitochondrial energy metabolism via the p44/42-PDK4 signaling pathway, influencing pyruvate dehydrogenase activity. The sequence is that of Probable G-protein coupled receptor 19 (Gpr19) from Mus musculus (Mouse).